The primary structure comprises 1198 residues: Structural polyprotein (1198 aa).

Residues 2–15 (TKKPGGPGKNRAIN) are interaction with host EXOC1. A hydrophobic; homodimerization of capsid protein C region spans residues 37-72 (LLDGRGPVRFVLALITFFKFTALAPTKALLGRWRAV). Positions 106-127 (GGNESSIMWLASLAIVIACAGA) are cleaved as a propeptide — ER anchor for the capsid protein C, removed in mature form by serine protease NS3. The chain crosses the membrane as a helical span at residues 110–130 (SSIMWLASLAIVIACAGAMKL). A glycan (N-linked (GlcNAc...) asparagine; by host) is linked at N142. Helical transmembrane passes span 254–274 (WIIR…MLGS) and 280–294 (VVFT…PAYS). Disulfide bonds link C297-C324, C354-C410, C354-C415, C368-C399, C386-C410, and C386-C415. The fusion peptide stretch occupies residues 392-405 (DRGWGNGCGLFGKG). N448 is a glycosylation site (N-linked (GlcNAc...) asparagine; by host). Disulfide bonds link C484–C581 and C598–C629. A run of 2 helical transmembrane segments spans residues 747–767 (FGGM…WMGV) and 774–794 (IALA…NVHA). Cystine bridges form between C798/C809, C849/C937, C973/C1017, C1074/C1123, C1085/C1106, and C1107/C1110. N924 and N1001 each carry an N-linked (GlcNAc...) asparagine; by host glycan. Residues 1151–1178 (MIDPFSAGPSGDVSGHPGGPSQEVDGQI) form a disordered region.

As to quaternary structure, homodimer. Interacts (via N-terminus) with host EXOC1 (via C-terminus); this interaction results in EXOC1 degradation through the proteasome degradation pathway. Interacts with host CAPRIN1; this interaction is involved in the suppression of the integrated stress response. Forms heterodimers with envelope protein E in the endoplasmic reticulum and Golgi. In terms of assembly, homodimer; in the endoplasmic reticulum and Golgi. Interacts with protein prM. Interacts with non-structural protein 1. In terms of processing, genome polyprotein: Specific enzymatic cleavages in vivo yield mature proteins. Cleavages in the lumen of endoplasmic reticulum are performed by host signal peptidase, whereas cleavages in the cytoplasmic side are performed by serine protease NS3. Signal cleavage at the 2K-4B site requires a prior NS3 protease-mediated cleavage at the 4A-2K site. Post-translationally, cleaved in post-Golgi vesicles by a host furin, releasing the mature small envelope protein M, and peptide pr. This cleavage is incomplete as up to 30% of viral particles still carry uncleaved prM. N-glycosylated.

Its subcellular location is the secreted. It localises to the virion membrane. The protein resides in the host endoplasmic reticulum membrane. In terms of biological role, plays a role in virus budding by binding to the cell membrane and gathering the viral RNA into a nucleocapsid that forms the core of a mature virus particle. During virus entry, may induce genome penetration into the host cytoplasm after hemifusion induced by the surface proteins. Can migrate to the cell nucleus where it modulates host functions. Overcomes the anti-viral effects of host EXOC1 by sequestering and degrading the latter through the proteasome degradation pathway. Inhibits the integrated stress response (ISR) in the infected cell by binding to host CAPRIN1. Functionally, inhibits RNA silencing by interfering with host Dicer. Its function is as follows. Prevents premature fusion activity of envelope proteins in trans-Golgi by binding to envelope protein E at pH6.0. After virion release in extracellular space, gets dissociated from E dimers. Acts as a chaperone for envelope protein E during intracellular virion assembly by masking and inactivating envelope protein E fusion peptide. prM is the only viral peptide matured by host furin in the trans-Golgi network probably to avoid catastrophic activation of the viral fusion activity in acidic Golgi compartment prior to virion release. prM-E cleavage is inefficient, and many virions are only partially matured. These uncleaved prM would play a role in immune evasion. In terms of biological role, may play a role in virus budding. Exerts cytotoxic effects by activating a mitochondrial apoptotic pathway through M ectodomain. May display a viroporin activity. Functionally, binds to host cell surface receptor and mediates fusion between viral and cellular membranes. Envelope protein is synthesized in the endoplasmic reticulum in the form of heterodimer with protein prM. They play a role in virion budding in the ER, and the newly formed immature particle is covered with 60 spikes composed of heterodimer between precursor prM and envelope protein E. The virion is transported to the Golgi apparatus where the low pH causes dissociation of PrM-E heterodimers and formation of E homodimers. prM-E cleavage is inefficient, and many virions are only partially matured. These uncleaved prM would play a role in immune evasion. This chain is Structural polyprotein, found in Ardeidae (herons).